The sequence spans 240 residues: 4-hydroxy-tetrahydrodipicolinate reductase (240 aa).

NAD(+)-binding positions include alanine 79–threonine 81 and serine 103–methionine 106. Histidine 135 functions as the Proton donor/acceptor in the catalytic mechanism. Residue histidine 136 coordinates (S)-2,3,4,5-tetrahydrodipicolinate. The active-site Proton donor is the lysine 139. Glycine 145–threonine 146 contributes to the (S)-2,3,4,5-tetrahydrodipicolinate binding site.

It belongs to the DapB family.

The protein resides in the cytoplasm. The enzyme catalyses (S)-2,3,4,5-tetrahydrodipicolinate + NAD(+) + H2O = (2S,4S)-4-hydroxy-2,3,4,5-tetrahydrodipicolinate + NADH + H(+). It carries out the reaction (S)-2,3,4,5-tetrahydrodipicolinate + NADP(+) + H2O = (2S,4S)-4-hydroxy-2,3,4,5-tetrahydrodipicolinate + NADPH + H(+). It participates in amino-acid biosynthesis; L-lysine biosynthesis via DAP pathway; (S)-tetrahydrodipicolinate from L-aspartate: step 4/4. Functionally, catalyzes the conversion of 4-hydroxy-tetrahydrodipicolinate (HTPA) to tetrahydrodipicolinate. The protein is 4-hydroxy-tetrahydrodipicolinate reductase of Staphylococcus aureus (strain Mu3 / ATCC 700698).